The chain runs to 492 residues: Glutamyl-tRNA(Gln) amidotransferase subunit A (492 aa).

Catalysis depends on charge relay system residues lysine 81 and serine 156. The Acyl-ester intermediate role is filled by serine 180.

It belongs to the amidase family. GatA subfamily. Heterotrimer of A, B and C subunits.

The enzyme catalyses L-glutamyl-tRNA(Gln) + L-glutamine + ATP + H2O = L-glutaminyl-tRNA(Gln) + L-glutamate + ADP + phosphate + H(+). In terms of biological role, allows the formation of correctly charged Gln-tRNA(Gln) through the transamidation of misacylated Glu-tRNA(Gln) in organisms which lack glutaminyl-tRNA synthetase. The reaction takes place in the presence of glutamine and ATP through an activated gamma-phospho-Glu-tRNA(Gln). The polypeptide is Glutamyl-tRNA(Gln) amidotransferase subunit A (Rhodococcus erythropolis (strain PR4 / NBRC 100887)).